A 258-amino-acid polypeptide reads, in one-letter code: Global transcriptional regulator CodY (258 aa).

The GAF domain stretch occupies residues methionine 1–leucine 156. The segment at residues alanine 204–arginine 223 is a DNA-binding region (H-T-H motif).

The protein belongs to the CodY family.

It is found in the cytoplasm. Functionally, DNA-binding global transcriptional regulator which is involved in the adaptive response to starvation and acts by directly or indirectly controlling the expression of numerous genes in response to nutrient availability. During rapid exponential growth, CodY is highly active and represses genes whose products allow adaptation to nutrient depletion. The sequence is that of Global transcriptional regulator CodY from Clostridium botulinum (strain Okra / Type B1).